We begin with the raw amino-acid sequence, 165 residues long: Cathelicidin-7 (165 aa).

Residues 1–29 (METQRASFSLGRSSLWLLLLGLVVPSASA) form the signal peptide. Positions 30–130 (QDLSYREAVL…FDITCNNIQS (101 aa)) are excised as a propeptide. Intrachain disulfides connect Cys86/Cys97 and Cys108/Cys125. Arg164 is subject to Arginine amide.

It belongs to the cathelicidin family. As to expression, expressed in bone marrow myeloid cells, spleen and testis.

The protein resides in the secreted. In terms of biological role, exerts a potent antimicrobial activity. In Bos taurus (Bovine), this protein is Cathelicidin-7 (CATHL7).